A 512-amino-acid chain; its full sequence is Respiratory nitrate reductase 1 beta chain (512 aa).

4Fe-4S ferredoxin-type domains lie at valine 7–glycine 35, threonine 175–glutamate 206, and glycine 208–lysine 237. [4Fe-4S] cluster contacts are provided by cysteine 16, cysteine 19, cysteine 22, cysteine 26, cysteine 184, cysteine 187, and cysteine 192. Residues cysteine 196, cysteine 217, and cysteine 223 each coordinate [3Fe-4S] cluster. [4Fe-4S] cluster-binding residues include cysteine 227, cysteine 244, cysteine 247, cysteine 259, and cysteine 263.

Dimer of heterotrimers each composed of an alpha, a beta and a gamma chain. Alpha and beta are catalytic chains; gamma chains are involved in binding the enzyme complex to the cytoplasmic membrane. Requires [4Fe-4S] cluster as cofactor. [3Fe-4S] cluster serves as cofactor.

The protein resides in the cell membrane. The catalysed reaction is nitrate + a quinol = a quinone + nitrite + H2O. Its function is as follows. The nitrate reductase enzyme complex allows S.flexneri to use nitrate as an electron acceptor during anaerobic growth. The beta chain is an electron transfer unit containing four cysteine clusters involved in the formation of iron-sulfur centers. Electrons are transferred from the gamma chain to the molybdenum cofactor of the alpha subunit. In Shigella flexneri, this protein is Respiratory nitrate reductase 1 beta chain (narH).